The sequence spans 231 residues: Orotate phosphoribosyltransferase (231 aa).

5-phospho-alpha-D-ribose 1-diphosphate-binding positions include Lys-27, 79–80 (YK), Arg-106, Lys-107, Lys-110, His-112, and 133–141 (DDVMTAGTA). Orotate is bound by residues Thr-137 and Arg-166.

Belongs to the purine/pyrimidine phosphoribosyltransferase family. PyrE subfamily. In terms of assembly, homodimer. Requires Mg(2+) as cofactor.

The enzyme catalyses orotidine 5'-phosphate + diphosphate = orotate + 5-phospho-alpha-D-ribose 1-diphosphate. It functions in the pathway pyrimidine metabolism; UMP biosynthesis via de novo pathway; UMP from orotate: step 1/2. In terms of biological role, catalyzes the transfer of a ribosyl phosphate group from 5-phosphoribose 1-diphosphate to orotate, leading to the formation of orotidine monophosphate (OMP). The protein is Orotate phosphoribosyltransferase of Bifidobacterium adolescentis (strain ATCC 15703 / DSM 20083 / NCTC 11814 / E194a).